The sequence spans 440 residues: Streptokinase A (440 aa).

Positions 1–26 are cleaved as a signal peptide; the sequence is MKNYLSIGVIALLFALTFGTVKSVQA.

Its function is as follows. This protein is not a protease, but it activates plasminogen by complexing with it. As a potential virulence factor, it is thought to prevent the formation of effective fibrin barriers around the site of infection, thereby contributing to the invasiveness of the cells. This chain is Streptokinase A (ska), found in Streptococcus pyogenes serotype M1.